The sequence spans 370 residues: Phosphoserine aminotransferase (370 aa).

An N-acetylmethionine modification is found at methionine 1. Positions 44 and 45 each coordinate O-phospho-L-serine. The residue at position 51 (lysine 51) is an N6-acetyllysine. Positions 79, 80, and 107 each coordinate pyridoxal 5'-phosphate. At lysine 127 the chain carries N6-acetyllysine. Residues threonine 156, aspartate 176, and glutamine 199 each contribute to the pyridoxal 5'-phosphate site. N6-(pyridoxal phosphate)lysine is present on lysine 200. Residues asparagine 241 and threonine 242 each contribute to the pyridoxal 5'-phosphate site. Residues lysine 269, lysine 318, and lysine 323 each carry the N6-acetyllysine modification. Serine 331 carries the post-translational modification Phosphoserine. Lysine 333 is subject to N6-acetyllysine. O-phospho-L-serine contacts are provided by histidine 335, arginine 336, and arginine 342.

It belongs to the class-V pyridoxal-phosphate-dependent aminotransferase family. SerC subfamily. Homodimer. The cofactor is pyridoxal 5'-phosphate. As to expression, expressed at high levels in the brain, liver, kidney and pancreas, and very weakly expressed in the thymus, prostate, testis and colon.

It catalyses the reaction O-phospho-L-serine + 2-oxoglutarate = 3-phosphooxypyruvate + L-glutamate. Its pathway is amino-acid biosynthesis; L-serine biosynthesis; L-serine from 3-phospho-D-glycerate: step 2/3. Its activity is regulated as follows. Phosphoserine transaminase activity is strongly stimulated by increasing the ionic strength. Involved in L-serine biosynthesis via the phosphorylated pathway, a three-step pathway converting the glycolytic intermediate 3-phospho-D-glycerate into L-serine. Catalyzes the second step, that is the pyridoxal 5'-phosphate-dependent transamination of 3-phosphohydroxypyruvate and L-glutamate to O-phosphoserine (OPS) and alpha-ketoglutarate. In Homo sapiens (Human), this protein is Phosphoserine aminotransferase.